Consider the following 406-residue polypeptide: Argininosuccinate synthase (406 aa).

ATP-binding positions include 13-21 and alanine 40; that span reads AYSGGLDTS. Residues tyrosine 91 and serine 96 each coordinate L-citrulline. An ATP-binding site is contributed by glycine 121. L-aspartate-binding residues include threonine 123, asparagine 127, and aspartate 128. Position 127 (asparagine 127) interacts with L-citrulline. L-citrulline-binding residues include arginine 131, serine 180, serine 189, glutamate 265, and tyrosine 277.

The protein belongs to the argininosuccinate synthase family. Type 1 subfamily. As to quaternary structure, homotetramer.

The protein resides in the cytoplasm. It catalyses the reaction L-citrulline + L-aspartate + ATP = 2-(N(omega)-L-arginino)succinate + AMP + diphosphate + H(+). The protein operates within amino-acid biosynthesis; L-arginine biosynthesis; L-arginine from L-ornithine and carbamoyl phosphate: step 2/3. In Syntrophotalea carbinolica (strain DSM 2380 / NBRC 103641 / GraBd1) (Pelobacter carbinolicus), this protein is Argininosuccinate synthase.